The primary structure comprises 179 residues: Large ribosomal subunit protein bL17 (179 aa).

The tract at residues 123 to 179 (RTRGTDTLPDTVTDTGPDSAPDPVPGSEPGSAAGDLPDADTAPADPGESSSNQRVIR) is disordered. The segment covering 154 to 168 (AAGDLPDADTAPADP) has biased composition (low complexity). A compositionally biased stretch (polar residues) spans 170–179 (ESSSNQRVIR).

The protein belongs to the bacterial ribosomal protein bL17 family. As to quaternary structure, part of the 50S ribosomal subunit. Contacts protein L32.

The chain is Large ribosomal subunit protein bL17 from Tropheryma whipplei (strain Twist) (Whipple's bacillus).